The following is a 239-amino-acid chain: Small ribosomal subunit protein uS3c (239 aa).

The KH type-2 domain maps to 43-139; it reads IKNYIQKNRK…RLNISIEKVK (97 aa). The tract at residues 50 to 80 is disordered; that stretch reads NRKKSSNRKLESDSSSEVITHNRKNDSGSSS.

The protein belongs to the universal ribosomal protein uS3 family. In terms of assembly, part of the 30S ribosomal subunit.

It localises to the plastid. The protein resides in the chloroplast. The protein is Small ribosomal subunit protein uS3c (rps3) of Lolium perenne (Perennial ryegrass).